Consider the following 471-residue polypeptide: Putative multidrug resistance protein MdtD (471 aa).

Over 1–12 (MTDLPDSTRWQL) the chain is Periplasmic. Residues 13 to 33 (WIVAFGFFMQSLDTTIVNTAI) form a helical membrane-spanning segment. The Cytoplasmic portion of the chain corresponds to 34 to 48 (PSMAQSLGESPLHMH). Residues 49–69 (MVIVSYVLTVAVMLPASGWLA) form a helical membrane-spanning segment. Topologically, residues 70–76 (DKVGVRN) are periplasmic. Residues 77-97 (IFFTAIVLFTLGSLFCALSGT) traverse the membrane as a helical segment. The Cytoplasmic segment spans residues 98-101 (LNEL). Residues 102–124 (LLARALQGVGGAMMVPVGRLTVM) form a helical membrane-spanning segment. Residues 125–137 (KIVPREQYMAAMT) lie on the Periplasmic side of the membrane. A helical membrane pass occupies residues 138 to 158 (FVTLPGQVGPLLGPALGGLLV). Topologically, residues 159 to 164 (EYASWH) are cytoplasmic. The chain crosses the membrane as a helical span at residues 165–185 (WIFLINIPVGIIGAIATLMLM). The Periplasmic segment spans residues 186–196 (PNYTMQTRRFD). A helical transmembrane segment spans residues 197–217 (LSGFLLLAVGMAVLTLALDGS). Residues 218-224 (KGTGLSP) lie on the Cytoplasmic side of the membrane. Residues 225–245 (LAIAGLVAVGVVALVLYLLHA) traverse the membrane as a helical segment. The Periplasmic portion of the chain corresponds to 246–262 (RNNNRALFSLKLFRTRT). Residues 263–283 (FSLGLAGSFAGRIGSGMLPFM) traverse the membrane as a helical segment. The Cytoplasmic segment spans residues 284 to 285 (TP). Residues 286–306 (VFLQIGLGFSPFHAGLMMIPM) form a helical membrane-spanning segment. Topologically, residues 307 to 341 (VLGSMGMKRIVVQVVNRFGYRRVLVATTLGLSLVT) are periplasmic. The chain crosses the membrane as a helical span at residues 342-362 (LLFMTTALLGWYYVLPFVLFL). The Cytoplasmic portion of the chain corresponds to 363–395 (QGMVNSTRFSSMNTLTLKDLPDNLASSGNSLLS). Residues 396–416 (MIMQLSMSIGVTIAGLLLGLF) form a helical membrane-spanning segment. The Periplasmic segment spans residues 417–430 (GSQHVSVDSGTTQT). Residues 431 to 451 (VFMYTWLSMAFIIALPAFIFA) traverse the membrane as a helical segment. Residues 452-471 (RVPNDTHQNVAISRRKRSAQ) are Cytoplasmic-facing.

Belongs to the major facilitator superfamily. TCR/Tet family.

The protein localises to the cell inner membrane. The sequence is that of Putative multidrug resistance protein MdtD from Shigella flexneri serotype 5b (strain 8401).